The sequence spans 50 residues: Metallothionein zym1 (50 aa).

Zn(2+) is bound by residues Cys7, Cys15, Cys17, Cys21, Cys23, Cys26, Cys30, Cys32, Cys40, Cys42, Cys45, and Cys47.

This sequence belongs to the metallothionein superfamily.

Its subcellular location is the cytoplasm. It is found in the nucleus. In terms of biological role, metallothionein involved in tolerance to zinc and cadmium. Binds four zinc ions. This Schizosaccharomyces pombe (strain 972 / ATCC 24843) (Fission yeast) protein is Metallothionein zym1 (zym1).